The sequence spans 1084 residues: CRISPR-associated endonuclease Cas9 (1084 aa).

Asp-8 (for RuvC-like nuclease domain) is an active-site residue. Asp-8, Glu-496, and Glu-500 together coordinate Mn(2+). Residues 504 to 665 (TEKRAREMDG…MDEEIDARSM (162 aa)) form the HNH Cas9-type domain. Residue His-573 is the Proton acceptor for HNH nuclease domain of the active site. His-727 provides a ligand contact to Mn(2+).

The protein belongs to the CRISPR-associated protein Cas9 family. Subtype II-C subfamily. Monomer. Binds crRNA and tracrRNA. Mg(2+) serves as cofactor.

Functionally, CRISPR (clustered regularly interspaced short palindromic repeat) is an adaptive immune system that provides protection against mobile genetic elements (viruses, transposable elements and conjugative plasmids). CRISPR clusters contain spacers, sequences complementary to antecedent mobile elements, and target invading nucleic acids. CRISPR clusters are transcribed and processed into CRISPR RNA (crRNA). In type II CRISPR systems correct processing of pre-crRNA requires a trans-encoded small RNA (tracrRNA), endogenous ribonuclease 3 (rnc) and this protein. The tracrRNA serves as a guide for ribonuclease 3-aided processing of pre-crRNA. Subsequently Cas9/crRNA/tracrRNA endonucleolytically cleaves linear or circular dsDNA target complementary to the spacer; Cas9 is inactive in the absence of the 2 guide RNAs (gRNA). Cas9 recognizes the protospacer adjacent motif (PAM) in the CRISPR repeat sequences to help distinguish self versus nonself, as targets within the bacterial CRISPR locus do not have PAMs. PAM recognition is also required for catalytic activity. This chain is CRISPR-associated endonuclease Cas9, found in Corynebacterium diphtheriae (strain ATCC 700971 / NCTC 13129 / Biotype gravis).